Here is a 284-residue protein sequence, read N- to C-terminus: Phosphatidylserine decarboxylase proenzyme (284 aa).

Active-site charge relay system; for autoendoproteolytic cleavage activity residues include Asp88, His145, and Ser248. Ser248 serves as the catalytic Schiff-base intermediate with substrate; via pyruvic acid; for decarboxylase activity. Residue Ser248 is modified to Pyruvic acid (Ser); by autocatalysis.

The protein belongs to the phosphatidylserine decarboxylase family. PSD-B subfamily. Prokaryotic type I sub-subfamily. Heterodimer of a large membrane-associated beta subunit and a small pyruvoyl-containing alpha subunit. Requires pyruvate as cofactor. Is synthesized initially as an inactive proenzyme. Formation of the active enzyme involves a self-maturation process in which the active site pyruvoyl group is generated from an internal serine residue via an autocatalytic post-translational modification. Two non-identical subunits are generated from the proenzyme in this reaction, and the pyruvate is formed at the N-terminus of the alpha chain, which is derived from the carboxyl end of the proenzyme. The autoendoproteolytic cleavage occurs by a canonical serine protease mechanism, in which the side chain hydroxyl group of the serine supplies its oxygen atom to form the C-terminus of the beta chain, while the remainder of the serine residue undergoes an oxidative deamination to produce ammonia and the pyruvoyl prosthetic group on the alpha chain. During this reaction, the Ser that is part of the protease active site of the proenzyme becomes the pyruvoyl prosthetic group, which constitutes an essential element of the active site of the mature decarboxylase.

Its subcellular location is the cell membrane. The catalysed reaction is a 1,2-diacyl-sn-glycero-3-phospho-L-serine + H(+) = a 1,2-diacyl-sn-glycero-3-phosphoethanolamine + CO2. The protein operates within phospholipid metabolism; phosphatidylethanolamine biosynthesis; phosphatidylethanolamine from CDP-diacylglycerol: step 2/2. Functionally, catalyzes the formation of phosphatidylethanolamine (PtdEtn) from phosphatidylserine (PtdSer). The protein is Phosphatidylserine decarboxylase proenzyme of Delftia acidovorans (strain DSM 14801 / SPH-1).